The primary structure comprises 262 residues: uncharacterized protein (262 aa).

Residues H7, H9, E96, H132, H156, and D211 each contribute to the a divalent metal cation site.

This sequence belongs to the metallo-dependent hydrolases superfamily. TatD-type hydrolase family. The cofactor is a divalent metal cation.

This is an uncharacterized protein from Mycoplasma genitalium (strain ATCC 33530 / DSM 19775 / NCTC 10195 / G37) (Mycoplasmoides genitalium).